We begin with the raw amino-acid sequence, 750 residues long: Photosystem I P700 chlorophyll a apoprotein A1 (750 aa).

The next 8 helical transmembrane spans lie at 70-93, 156-179, 195-219, 291-309, 346-369, 385-411, 433-455, and 531-549; these read VFSAHFGQLAIIFVWLSGMYFHGA, LYCTAIGALIFATLMLFAGWFHYH, LNHHLAGLLGLGSLAWAGHQVHVSL, TVHHHLAIAVLFLVAGHMY, WHAQLALNLAMLGSLTIIVAHHMY, LSLFTHHMWIGGFLVVGAAAHAAIFMV, AIISHLNWVCIFLGFHSFGLYIH, and FLVHHIHAFTIHVTVLILL. The [4Fe-4S] cluster site is built by Cys573 and Cys582. Helical transmembrane passes span 589 to 610 and 664 to 686; these read HVFLGLFWMYNSISIVIFHFSW and LSAYGLLFLGAHFVWAFSLMFLF. Chlorophyll a' is bound at residue His675. Residues Met683 and Tyr691 each coordinate chlorophyll a. A phylloquinone-binding site is contributed by Trp692. The chain crosses the membrane as a helical span at residues 724–744; the sequence is AVGVAHYLLGGIATTWAFFLA.

The protein belongs to the PsaA/PsaB family. In terms of assembly, the PsaA/B heterodimer binds the P700 chlorophyll special pair and subsequent electron acceptors. PSI consists of a core antenna complex that captures photons, and an electron transfer chain that converts photonic excitation into a charge separation. The eukaryotic PSI reaction center is composed of at least 11 subunits. The cofactor is P700 is a chlorophyll a/chlorophyll a' dimer, A0 is one or more chlorophyll a, A1 is one or both phylloquinones and FX is a shared 4Fe-4S iron-sulfur center..

It localises to the plastid. Its subcellular location is the chloroplast thylakoid membrane. It carries out the reaction reduced [plastocyanin] + hnu + oxidized [2Fe-2S]-[ferredoxin] = oxidized [plastocyanin] + reduced [2Fe-2S]-[ferredoxin]. Functionally, psaA and PsaB bind P700, the primary electron donor of photosystem I (PSI), as well as the electron acceptors A0, A1 and FX. PSI is a plastocyanin-ferredoxin oxidoreductase, converting photonic excitation into a charge separation, which transfers an electron from the donor P700 chlorophyll pair to the spectroscopically characterized acceptors A0, A1, FX, FA and FB in turn. Oxidized P700 is reduced on the lumenal side of the thylakoid membrane by plastocyanin. The sequence is that of Photosystem I P700 chlorophyll a apoprotein A1 from Psilotum nudum (Whisk fern).